A 506-amino-acid polypeptide reads, in one-letter code: Cytochrome P450 monooxygenase BOA3 (506 aa).

A helical membrane pass occupies residues 15 to 35 (IYLWIGFVLVVLLAYPTYFAI). Residue Cys451 participates in heme binding.

It belongs to the cytochrome P450 family. Requires heme as cofactor.

The protein resides in the membrane. It functions in the pathway polyketide biosynthesis. Its function is as follows. Cytochrome P450 monooxygenase; part of the gene cluster A that mediates the biosynthesis of botcinic acid and its botcinin derivatives, acetate-derived polyketides that contribute to virulence when combined with the sesquiterpene botrydial. Botcinic acid and its derivatives have been shown to induce chlorosis and necrosis during host plant infection, but also have antifungal activities. Two polyketide synthases, BOA6 and BOA9, are involved in the biosynthesis of botcinins. BOA6 mediates the formation of the per-methylated tetraketide core by condensation of four units of malonyl-CoA with one unit of acetyl-CoA, which would be methylated in activated methylene groups to yield a bicyclic acid intermediate that could then either be converted to botrylactone derivatives or lose the starter acetate unit through a retro-Claisen type C-C bond cleavage to yield botcinin derivatives. The second polyketide synthase, BOA9, is probably required for the biosynthesis of the tetraketide side chain of botcinins. The methyltransferase (MT) domain within BOA6 is probably responsible for the incorporation of four methyl groups. The trans-enoyl reductase BOA5 might take over the enoyl reductase function of BOA6 that misses an ER domain. The monooxygenases BOA2, BOA3 and BOA4 might be involved in further hydroxylations at C4, C5 and C8, whereas BOA7, close to BOA9, could potentially be involved in the hydroxylation at C4 in the side chain of botcinins. The protein is Cytochrome P450 monooxygenase BOA3 of Botryotinia fuckeliana (strain B05.10) (Noble rot fungus).